Reading from the N-terminus, the 170-residue chain is Peptide deformylase (170 aa).

C91 and H133 together coordinate Fe cation. E134 is a catalytic residue. Residue H137 coordinates Fe cation.

This sequence belongs to the polypeptide deformylase family. Fe(2+) is required as a cofactor.

The enzyme catalyses N-terminal N-formyl-L-methionyl-[peptide] + H2O = N-terminal L-methionyl-[peptide] + formate. Functionally, removes the formyl group from the N-terminal Met of newly synthesized proteins. Requires at least a dipeptide for an efficient rate of reaction. N-terminal L-methionine is a prerequisite for activity but the enzyme has broad specificity at other positions. The chain is Peptide deformylase from Pasteurella multocida (strain Pm70).